A 779-amino-acid chain; its full sequence is LPS-assembly protein LptD (779 aa).

A signal peptide spans 1 to 23; sequence MKIRYSVLSTFIISALYSQDTQA.

This sequence belongs to the LptD family. As to quaternary structure, component of the lipopolysaccharide transport and assembly complex. Interacts with LptE and LptA.

The protein resides in the cell outer membrane. Together with LptE, is involved in the assembly of lipopolysaccharide (LPS) at the surface of the outer membrane. This is LPS-assembly protein LptD from Haemophilus ducreyi (strain 35000HP / ATCC 700724).